A 520-amino-acid chain; its full sequence is Putative cytochrome P450 CYP13A3 (520 aa).

Cysteine 464 contributes to the heme binding site.

Belongs to the cytochrome P450 family. Requires heme as cofactor.

In terms of biological role, cytochromes P450 are a group of heme-thiolate monooxygenases. They oxidize a variety of structurally unrelated compounds, including steroids, fatty acids, and xenobiotics. This Caenorhabditis elegans protein is Putative cytochrome P450 CYP13A3 (cyp-13A3).